The sequence spans 180 residues: ATP-dependent protease subunit HslV (180 aa).

Thr7 is a catalytic residue. Residues Ala165, Cys168, and Thr171 each contribute to the Na(+) site.

It belongs to the peptidase T1B family. HslV subfamily. In terms of assembly, a double ring-shaped homohexamer of HslV is capped on each side by a ring-shaped HslU homohexamer. The assembly of the HslU/HslV complex is dependent on binding of ATP.

The protein localises to the cytoplasm. It carries out the reaction ATP-dependent cleavage of peptide bonds with broad specificity.. Its activity is regulated as follows. Allosterically activated by HslU binding. Protease subunit of a proteasome-like degradation complex believed to be a general protein degrading machinery. The chain is ATP-dependent protease subunit HslV from Geobacillus kaustophilus (strain HTA426).